The chain runs to 472 residues: Adenosylhomocysteinase (472 aa).

Residues T64, D138, and E198 each contribute to the substrate site. 199 to 201 contacts NAD(+); sequence TTT. Residues K228 and D232 each contribute to the substrate site. Residues N233, 262–267, E285, N320, 341–343, and N386 each bind NAD(+); these read GFGDVG and IGH.

It belongs to the adenosylhomocysteinase family. NAD(+) is required as a cofactor.

The protein localises to the cytoplasm. It carries out the reaction S-adenosyl-L-homocysteine + H2O = L-homocysteine + adenosine. Its pathway is amino-acid biosynthesis; L-homocysteine biosynthesis; L-homocysteine from S-adenosyl-L-homocysteine: step 1/1. In terms of biological role, may play a key role in the regulation of the intracellular concentration of adenosylhomocysteine. The protein is Adenosylhomocysteinase of Prochlorococcus marinus (strain MIT 9312).